The chain runs to 423 residues: MKAELIAVGTEILTGQIVNTNAQFLSEKMAELGIDVYFQTAVGDNEERLLSVITTASQRSDLVILCGGLGPTKDDLTKQTLAKYLRKDLVYDEQACQKLDDFFAKRKPSSRTPNNERQAQVIEGSIPLPNKTGLAVGGFITVDGISYVVLPGPPSELKSMVNEELVPLLSKQYSTLYSKVLRFFGVGESQLVTVLSDFIENQTDPTIAPYAKTGEVTLRLSTKTENQALADKKLGQLEAQLLSRKTLEGQPLADVFYGYGEDNSLARETFELLVKYDKTITAAESLTAGLFQSTLASFPGASQVFNGGFVAYSMEEKAKMLGLPLEELKSHGVVSAYTAEGMAEQARLLTGADIGVSLTGVAGPDMLEEQPAGTVFIGLATQTKVESIKVLISGQSRLDVRYIATLHAFNMVRKTLLKLENLL.

This sequence belongs to the CinA family.

The protein is Putative competence-damage inducible protein of Streptococcus pyogenes serotype M6 (strain ATCC BAA-946 / MGAS10394).